The chain runs to 416 residues: Adipocyte plasma membrane-associated protein (416 aa).

Topologically, residues 1–39 are cytoplasmic; it reads MNEPEGLRFRRLNRPQIITDELQEPQYKGTSTYSGKVFR. Residues 40 to 60 form a helical membrane-spanning segment; the sequence is VILVTLGGCLILPLLVVFFLL. Topologically, residues 61 to 412 are extracellular; it reads ESPIHPELLS…FRSPYLCKLD (352 aa). Asn-160 carries an N-linked (GlcNAc...) asparagine glycan.

The protein belongs to the strictosidine synthase family.

The protein localises to the membrane. The protein is Adipocyte plasma membrane-associated protein (apmap) of Salmo salar (Atlantic salmon).